A 111-amino-acid polypeptide reads, in one-letter code: MEAKAIAKYVRMSPMKVKIVLDLIRGKNVNEAFAILQYTPKDAAVVINKVLKSAVANAENNFNLDGNRLYVSEAYAGQGPTLKRFQPHAQGRAFSIKKRSSHITVIVKERD.

This sequence belongs to the universal ribosomal protein uL22 family. In terms of assembly, part of the 50S ribosomal subunit.

This protein binds specifically to 23S rRNA; its binding is stimulated by other ribosomal proteins, e.g. L4, L17, and L20. It is important during the early stages of 50S assembly. It makes multiple contacts with different domains of the 23S rRNA in the assembled 50S subunit and ribosome. In terms of biological role, the globular domain of the protein is located near the polypeptide exit tunnel on the outside of the subunit, while an extended beta-hairpin is found that lines the wall of the exit tunnel in the center of the 70S ribosome. The polypeptide is Large ribosomal subunit protein uL22 (Clostridium acetobutylicum (strain ATCC 824 / DSM 792 / JCM 1419 / IAM 19013 / LMG 5710 / NBRC 13948 / NRRL B-527 / VKM B-1787 / 2291 / W)).